Consider the following 238-residue polypeptide: Peptidyl-tRNA hydrolase (238 aa).

Tyr-14 serves as a coordination point for tRNA. His-19 acts as the Proton acceptor in catalysis. TRNA contacts are provided by Tyr-64, Asn-66, and Asn-112. The disordered stretch occupies residues 202-225; the sequence is PAAQSHIHQARNSAQPKKLPETGP. Residues 207 to 216 show a composition bias toward polar residues; the sequence is HIHQARNSAQ.

The protein belongs to the PTH family. As to quaternary structure, monomer.

Its subcellular location is the cytoplasm. It catalyses the reaction an N-acyl-L-alpha-aminoacyl-tRNA + H2O = an N-acyl-L-amino acid + a tRNA + H(+). Its function is as follows. Hydrolyzes ribosome-free peptidyl-tRNAs (with 1 or more amino acids incorporated), which drop off the ribosome during protein synthesis, or as a result of ribosome stalling. Catalyzes the release of premature peptidyl moieties from peptidyl-tRNA molecules trapped in stalled 50S ribosomal subunits, and thus maintains levels of free tRNAs and 50S ribosomes. The protein is Peptidyl-tRNA hydrolase of Agrobacterium fabrum (strain C58 / ATCC 33970) (Agrobacterium tumefaciens (strain C58)).